The primary structure comprises 30 residues: Hementerin (30 aa).

Ca(2+) serves as cofactor.

It is found in the secreted. With respect to regulation, fibrino(geno)lytic activity inhibited by EDTA but not by PMSF, E-64, 6-AHA and aprotinin. Functionally, cleaves fibrinogen Aalpha (FGA), gamma (FGG) and Bbeta (FGB) chains. Degrades cross-linked fibrin. Has no amidolytic, plasminogenolytic or caseinolytic activity. Inhibits platelet aggregation induced by collagen (IC(50)=7.5ug/ml) and various other agonists, presumably via activation of a nitridergic pathway. Inhibition is accompanied by reduced ATP release from and surface expression of SELP and CD63 on platelets as well as increased intracellular levels of Ca(2+), cGMP and nitric oxide synthase activity. This chain is Hementerin, found in Haementeria depressa (Leech).